Reading from the N-terminus, the 554-residue chain is Arginine--tRNA ligase (554 aa).

Positions 129-139 (ANPTGPLHIGH) match the 'HIGH' region motif.

Belongs to the class-I aminoacyl-tRNA synthetase family. Monomer.

It is found in the cytoplasm. The catalysed reaction is tRNA(Arg) + L-arginine + ATP = L-arginyl-tRNA(Arg) + AMP + diphosphate. This chain is Arginine--tRNA ligase, found in Syntrophotalea carbinolica (strain DSM 2380 / NBRC 103641 / GraBd1) (Pelobacter carbinolicus).